Reading from the N-terminus, the 218-residue chain is N-(5'-phosphoribosyl)anthranilate isomerase (218 aa).

The protein belongs to the TrpF family.

It catalyses the reaction N-(5-phospho-beta-D-ribosyl)anthranilate = 1-(2-carboxyphenylamino)-1-deoxy-D-ribulose 5-phosphate. The protein operates within amino-acid biosynthesis; L-tryptophan biosynthesis; L-tryptophan from chorismate: step 3/5. In Rhodopseudomonas palustris (strain BisB18), this protein is N-(5'-phosphoribosyl)anthranilate isomerase.